The primary structure comprises 477 residues: ATP synthase subunit beta (477 aa).

Position 148 to 155 (148 to 155 (GGAGVGKT)) interacts with ATP.

The protein belongs to the ATPase alpha/beta chains family. In terms of assembly, F-type ATPases have 2 components, CF(1) - the catalytic core - and CF(0) - the membrane proton channel. CF(1) has five subunits: alpha(3), beta(3), gamma(1), delta(1), epsilon(1). CF(0) has three main subunits: a(1), b(2) and c(9-12). The alpha and beta chains form an alternating ring which encloses part of the gamma chain. CF(1) is attached to CF(0) by a central stalk formed by the gamma and epsilon chains, while a peripheral stalk is formed by the delta and b chains.

The protein resides in the cell inner membrane. It catalyses the reaction ATP + H2O + 4 H(+)(in) = ADP + phosphate + 5 H(+)(out). Functionally, produces ATP from ADP in the presence of a proton gradient across the membrane. The catalytic sites are hosted primarily by the beta subunits. The polypeptide is ATP synthase subunit beta (Psychrobacter cryohalolentis (strain ATCC BAA-1226 / DSM 17306 / VKM B-2378 / K5)).